Consider the following 186-residue polypeptide: Ribosome-recycling factor (186 aa).

It belongs to the RRF family.

The protein localises to the cytoplasm. Responsible for the release of ribosomes from messenger RNA at the termination of protein biosynthesis. May increase the efficiency of translation by recycling ribosomes from one round of translation to another. This Bartonella quintana (strain Toulouse) (Rochalimaea quintana) protein is Ribosome-recycling factor.